We begin with the raw amino-acid sequence, 142 residues long: Large ribosomal subunit protein uL11 (142 aa).

It belongs to the universal ribosomal protein uL11 family. As to quaternary structure, part of the ribosomal stalk of the 50S ribosomal subunit. Interacts with L10 and the large rRNA to form the base of the stalk. L10 forms an elongated spine to which L12 dimers bind in a sequential fashion forming a multimeric L10(L12)X complex. One or more lysine residues are methylated.

Forms part of the ribosomal stalk which helps the ribosome interact with GTP-bound translation factors. This is Large ribosomal subunit protein uL11 from Bartonella henselae (strain ATCC 49882 / DSM 28221 / CCUG 30454 / Houston 1) (Rochalimaea henselae).